The sequence spans 607 residues: Developmental gene 1062 protein (607 aa).

Disordered regions lie at residues 62–84 (LQGQ…HNNQ), 334–451 (ICDD…SNFQ), and 568–602 (DNNT…NDLL). Low complexity predominate over residues 334–363 (ICDDSSNSSTPSLSSYSNGNNKYNNNNNDS). The span at 364-382 (SESDESDDDDNNDDDDNDS) shows a compositional bias: acidic residues. 2 stretches are compositionally biased toward low complexity: residues 383–451 (IDFN…SNFQ) and 568–582 (DNNT…ISVN).

In Dictyostelium discoideum (Social amoeba), this protein is Developmental gene 1062 protein (DG1062).